A 412-amino-acid polypeptide reads, in one-letter code: Tyrosine--tRNA ligase (412 aa).

Tyr-31 contacts L-tyrosine. The short motif at 36-45 (PTAASLHIGH) is the 'HIGH' region element. Positions 162 and 166 each coordinate L-tyrosine. The short motif at 222–226 (KIGKT) is the 'KMSKS' region element. Lys-225 contributes to the ATP binding site. In terms of domain architecture, S4 RNA-binding spans 345–412 (KRWIDLFVGV…KKKKLVLHLI (68 aa)).

It belongs to the class-I aminoacyl-tRNA synthetase family. TyrS type 1 subfamily. Homodimer.

Its subcellular location is the cytoplasm. It carries out the reaction tRNA(Tyr) + L-tyrosine + ATP = L-tyrosyl-tRNA(Tyr) + AMP + diphosphate + H(+). Functionally, catalyzes the attachment of tyrosine to tRNA(Tyr) in a two-step reaction: tyrosine is first activated by ATP to form Tyr-AMP and then transferred to the acceptor end of tRNA(Tyr). This is Tyrosine--tRNA ligase from Chlamydia caviae (strain ATCC VR-813 / DSM 19441 / 03DC25 / GPIC) (Chlamydophila caviae).